A 61-amino-acid chain; its full sequence is Alpha-conotoxin-like Sm1.1 (61 aa).

The N-terminal stretch at 1–16 (MFTVFLLVVLATTVVS) is a signal peptide. Positions 17–43 (FPSDRASDGRDDEAKDERSDMHESGRK) are excised as a propeptide. The interval 19–46 (SDRASDGRDDEAKDERSDMHESGRKGRG) is disordered. Residues 21-42 (RASDGRDDEAKDERSDMHESGR) are compositionally biased toward basic and acidic residues. 2 cysteine pairs are disulfide-bonded: C48–C53 and C49–C59. A 4-hydroxyproline; partial modification is found at P55. C59 bears the Cysteine amide mark.

Belongs to the conotoxin A superfamily. Expressed by the venom duct.

The protein resides in the secreted. Alpha-conotoxins act on postsynaptic membranes, they bind to the nicotinic acetylcholine receptors (nAChR) and thus inhibit them. The polypeptide is Alpha-conotoxin-like Sm1.1 (Conus stercusmuscarum (Fly-specked cone)).